We begin with the raw amino-acid sequence, 752 residues long: BCLAF1 and THRAP3 family member 3 (752 aa).

Over residues 1 to 13 the composition is skewed to basic residues; that stretch reads MARSRSRSPRWKQ. Disordered regions lie at residues 1–114, 132–177, and 190–252; these read MARS…YMPT, PTVQ…QMSL, and DELR…DPAR. A phosphoserine mark is found at serine 15 and serine 17. Positions 23 to 57 are enriched in basic and acidic residues; that stretch reads FEYHEERHFHGHYDPEYRHDQQRPFTWRMDDEKHG. Serine 78 and serine 80 each carry phosphoserine. Over residues 85–109 the composition is skewed to basic and acidic residues; the sequence is PVEKFDTYKPHQEYFPGRGDDDRRS. Basic and acidic residues predominate over residues 190-199; the sequence is DELRHQRVQE. Position 205 is a phosphoserine (serine 205). Composition is skewed to basic and acidic residues over residues 222–231 and 238–252; these read RYPEDHDFRK and RPTD…DPAR. Residue lysine 416 forms a Glycyl lysine isopeptide (Lys-Gly) (interchain with G-Cter in SUMO2) linkage. Serine 592 is modified (phosphoserine).

It belongs to the BCLAF1/THRAP3 family.

It is found in the mitochondrion. The protein is BCLAF1 and THRAP3 family member 3 of Mus musculus (Mouse).